Consider the following 380-residue polypeptide: Alcohol dehydrogenase 2 (380 aa).

8 residues coordinate Zn(2+): cysteine 48, threonine 50, histidine 70, cysteine 100, cysteine 103, cysteine 106, cysteine 114, and cysteine 178. An alcohol-binding residues include threonine 50 and histidine 70. NAD(+) is bound at residue threonine 50. Residues 203 to 208 (GLGAVG), aspartate 227, arginine 232, threonine 273, valine 296, 296 to 298 (VGV), phenylalanine 323, and arginine 373 each bind NAD(+).

This sequence belongs to the zinc-containing alcohol dehydrogenase family. As to quaternary structure, homodimer. Homotetramer. The cofactor is Zn(2+).

The protein localises to the cytoplasm. It carries out the reaction a primary alcohol + NAD(+) = an aldehyde + NADH + H(+). The enzyme catalyses a secondary alcohol + NAD(+) = a ketone + NADH + H(+). This chain is Alcohol dehydrogenase 2 (ADH2), found in Solanum tuberosum (Potato).